A 120-amino-acid polypeptide reads, in one-letter code: Prefoldin subunit beta (120 aa).

The protein belongs to the prefoldin subunit beta family. In terms of assembly, heterohexamer of two alpha and four beta subunits.

The protein resides in the cytoplasm. In terms of biological role, molecular chaperone capable of stabilizing a range of proteins. Seems to fulfill an ATP-independent, HSP70-like function in archaeal de novo protein folding. In Methanopyrus kandleri (strain AV19 / DSM 6324 / JCM 9639 / NBRC 100938), this protein is Prefoldin subunit beta (pfdB).